The chain runs to 662 residues: UvrABC system protein B (662 aa).

Residues 25 to 412 (EGIEKGLKMQ…SQKIVEQIIR (388 aa)) enclose the Helicase ATP-binding domain. ATP is bound at residue 38-45 (GVTGSGKT). Residues 91-114 (YYDYYQPEAYLPATDTYIEKDSAI) carry the Beta-hairpin motif. A Helicase C-terminal domain is found at 429–595 (QVDDLYGEIK…TVQKAVRDVI (167 aa)). The UVR domain occupies 622–657 (KQYVEKLTREMKEAAKALEFEKAAMLRDLIIELRAQ).

Belongs to the UvrB family. Forms a heterotetramer with UvrA during the search for lesions. Interacts with UvrC in an incision complex.

The protein localises to the cytoplasm. Its function is as follows. The UvrABC repair system catalyzes the recognition and processing of DNA lesions. A damage recognition complex composed of 2 UvrA and 2 UvrB subunits scans DNA for abnormalities. Upon binding of the UvrA(2)B(2) complex to a putative damaged site, the DNA wraps around one UvrB monomer. DNA wrap is dependent on ATP binding by UvrB and probably causes local melting of the DNA helix, facilitating insertion of UvrB beta-hairpin between the DNA strands. Then UvrB probes one DNA strand for the presence of a lesion. If a lesion is found the UvrA subunits dissociate and the UvrB-DNA preincision complex is formed. This complex is subsequently bound by UvrC and the second UvrB is released. If no lesion is found, the DNA wraps around the other UvrB subunit that will check the other stand for damage. The protein is UvrABC system protein B of Carboxydothermus hydrogenoformans (strain ATCC BAA-161 / DSM 6008 / Z-2901).